Here is a 632-residue protein sequence, read N- to C-terminus: MGIRGMLRAAVILLLIRTWLAEGNYPSPIPKFHFEFSSAVPEVVLNLFNCKNCANEAVVQKILDRVLSRYDVRLRPNFGGAPVPVRISIYVTSIEQISEMNMDYTITMFFHQTWKDSRLAYYETTLNLTLDYRMHEKLWVPDCYFLNSKDAFVHDVTVENRVFQLHPDGTVRYGIRLTTTAACSLDLHKFPMDKQACNLVVESYGYTVEDIILFWDDNGNAIHMTEELHIPQFTFLGRTITSKEVYFYTGSYIRLILKFQVQREVNSYLVQVYWPTVLTTITSWISFWMNYDSSAARVTIGLTSMLILTTIDSHLRDKLPNISCIKAIDIYILVCLFFVFLSLLEYVYINYLFYSRGPRRQPRRHRRPRRVIARYRYQQVVVGNVQDGLINVEDGVSSLPITPAQAPLASPESLGSLTSTSEQAQLATSESLSPLTSLSGQAPLATGESLSDLPSTSEQARHSYGVRFNGFQADDSIIPTEIRNRVEAHGHGVTHDHEDSNESLSSDERHGHGPSGKPMLHHGEKGVQEAGWDLDDNNDKSDCLAIKEQFKCDTNSTWGLNDDELMAHGQEKDSSSESEDSCPPSPGCSFTEGFSFDLFNPDYVPKVDKWSRFLFPLAFGLFNIVYWVYHMY.

An N-terminal signal peptide occupies residues 1–21; that stretch reads MGIRGMLRAAVILLLIRTWLA. Over 22–268 the chain is Extracellular; it reads EGNYPSPIPK…FQVQREVNSY (247 aa). N-linked (GlcNAc...) asparagine glycosylation occurs at Asn127. Cys183 and Cys197 are oxidised to a cystine. The chain crosses the membrane as a helical span at residues 269–289; that stretch reads LVQVYWPTVLTTITSWISFWM. At 290–297 the chain is on the cytoplasmic side; sequence NYDSSAAR. A helical membrane pass occupies residues 298 to 315; it reads VTIGLTSMLILTTIDSHL. Topologically, residues 316 to 326 are extracellular; it reads RDKLPNISCIK. A helical membrane pass occupies residues 327 to 347; the sequence is AIDIYILVCLFFVFLSLLEYV. Topologically, residues 348–611 are cytoplasmic; the sequence is YINYLFYSRG…DYVPKVDKWS (264 aa). Disordered stretches follow at residues 410-458 and 491-523; these read SPES…STSE and HGVT…LHHG. Over residues 413–425 the composition is skewed to polar residues; that stretch reads SLGSLTSTSEQAQ. Positions 426–439 are enriched in low complexity; it reads LATSESLSPLTSLS. Over residues 448–458 the composition is skewed to polar residues; that stretch reads ESLSDLPSTSE. Positions 491–511 are enriched in basic and acidic residues; that stretch reads HGVTHDHEDSNESLSSDERHG. Residues 612 to 632 form a helical membrane-spanning segment; the sequence is RFLFPLAFGLFNIVYWVYHMY.

Belongs to the ligand-gated ion channel (TC 1.A.9) family. Gamma-aminobutyric acid receptor (TC 1.A.9.5) subfamily. GABRQ sub-subfamily. As to quaternary structure, heteropentamer, formed by a combination of alpha (GABRA1-6), beta (GABRB1-3), gamma (GABRG1-3), delta (GABRD), epsilon (GABRE), rho (GABRR1-3), pi (GABRP) and theta (GABRQ) chains, each subunit exhibiting distinct physiological and pharmacological properties. Expressed in brain.

Its subcellular location is the postsynaptic cell membrane. The protein localises to the cell membrane. It carries out the reaction chloride(in) = chloride(out). Its activity is regulated as follows. Potentiated by etomidate, propofol, pregnanolone and pentobarbital. In terms of biological role, theta subunit of the heteropentameric ligand-gated chloride channel gated by gamma-aminobutyric acid (GABA), a major inhibitory neurotransmitter in the brain. GABA-gated chloride channels, also named GABA(A) receptors (GABAAR), consist of five subunits arranged around a central pore and contain GABA active binding site(s) located at the alpha and beta subunit interfaces. When activated by GABA, GABAARs selectively allow the flow of chloride anions across the cell membrane down their electrochemical gradient. The sequence is that of Gamma-aminobutyric acid receptor subunit theta from Homo sapiens (Human).